Here is a 432-residue protein sequence, read N- to C-terminus: Diaminopimelate decarboxylase (432 aa).

N6-(pyridoxal phosphate)lysine is present on K66. Residues G248 and 290–293 each bind pyridoxal 5'-phosphate; that span reads EPGR. 3 residues coordinate substrate: R293, R330, and Y334. C361 (proton donor) is an active-site residue. E362 and Y390 together coordinate substrate. Y390 is a binding site for pyridoxal 5'-phosphate.

This sequence belongs to the Orn/Lys/Arg decarboxylase class-II family. LysA subfamily. Homodimer. The cofactor is pyridoxal 5'-phosphate.

The enzyme catalyses meso-2,6-diaminopimelate + H(+) = L-lysine + CO2. The protein operates within amino-acid biosynthesis; L-lysine biosynthesis via DAP pathway; L-lysine from DL-2,6-diaminopimelate: step 1/1. Its function is as follows. Specifically catalyzes the decarboxylation of meso-diaminopimelate (meso-DAP) to L-lysine. The polypeptide is Diaminopimelate decarboxylase (Bacillus methanolicus).